The primary structure comprises 127 residues: Small ribosomal subunit protein uS12 (127 aa).

Aspartate 89 carries the 3-methylthioaspartic acid modification.

This sequence belongs to the universal ribosomal protein uS12 family. Part of the 30S ribosomal subunit. Contacts proteins S8 and S17. May interact with IF1 in the 30S initiation complex.

With S4 and S5 plays an important role in translational accuracy. In terms of biological role, interacts with and stabilizes bases of the 16S rRNA that are involved in tRNA selection in the A site and with the mRNA backbone. Located at the interface of the 30S and 50S subunits, it traverses the body of the 30S subunit contacting proteins on the other side and probably holding the rRNA structure together. The combined cluster of proteins S8, S12 and S17 appears to hold together the shoulder and platform of the 30S subunit. In Akkermansia muciniphila (strain ATCC BAA-835 / DSM 22959 / JCM 33894 / BCRC 81048 / CCUG 64013 / CIP 107961 / Muc), this protein is Small ribosomal subunit protein uS12.